The chain runs to 345 residues: uncharacterized protein (345 aa).

A disordered region spans residues 1-98; that stretch reads MNDEMKGKSG…ISGKSFIDPE (98 aa). Composition is skewed to basic and acidic residues over residues 18-27, 42-68, and 76-86; these read RSDDDSDKRT, SRADGGRRPARDDKQSQPRDRKWEDSP, and PGDETPEKADH.

Belongs to the class IV-like SAM-binding methyltransferase superfamily. RNA methyltransferase TrmH family.

This is an uncharacterized protein from Escherichia coli O157:H7.